The chain runs to 1464 residues: MALSKAKGNDGKITYPPGVKEISDKISKEEMVRRLKMVVKTFMDMDQDSEEEKEQYLNLALHLASDFFLKHPDKDVRLLVACCLADIFRIYAPEAPYTSPDKLKDIFMFITRQLKGLEDTKSPQFNRYFYLLENIAWVKSYNICFELEDCNEIFTQLYRTLFSVINNGHNQKVHMHMVDLMSSIVCEGDTVSQELLDSVLVNLVPAHKNLNKQAYDLAKALLKRTAQAIEPYITNFFNQVLMLGKTSISDLSEHVFDLILELYNIDSHLLLSVLPQLEFKLKSNDNEERLQVVKLLAKMFGAKDSELASQNKPLWQCYLGRFNDIHVPIRLECVKFASHSLMNHPDLAKDLTEYLKVRSHDPEEAIRHDVIVSIVTAAKKDLLLVNDQLLNFVRERTLDKRWRVRKEAMMGLAQIYKKYSLQVEAGKESAKQISWIKDKLLHIYYQNSIDDRLLVERIFAQYMVPHNLETTERMKCLYYLYATLDTNAVKALNEMWKCQNMLRHHVKDLLDLIKKPKTEAGSKAIFSKVMVITKNLPDPGKGQDFLKKFTQVLEDDEKIRGQLEKLVSPTCSYKQAEVCVRDITKKLGNPKQPTNPFLEMIKFLLERIAPVHIDTESISSLIKLVNKSIDGTADDEDEGVPTDQAIRAGLELLKVLSFTHPISFHSAETFESLLACLKMDDEKVAEAALQIFKNTGNKIEEDFPHIRSALLPVLQQKAKKGSPRQAKYSIHCIHAIFSSKETQFAQIFEPLHKSLDPGNPEQLITSLVTIGHIAQLAPDQFTAPLKSMVATFVVKDLLMSDQLPGKKTTKLWVPDDEVSQETMVKIQAIKMMVRWLLGMKNNLSKSGNSTLRLLTAILHTDGDLTEHGKLSKPDMSRLRLAAGSAIVKLAQEPCYHEIITLEQYQLCALVINDECYQVRQLFAQKLHKGLSRLRLPLEYMAICALCAKDPVKERRAHARQCLVKNINVRREYLKQHAAVSEKLFSLLPEYVVPYTVHLLTHDPDYVKVQDIEQLKDIKECLWFVLEILMSKNENNSHAFIRKMVEYIKQTKDAQNPDDQKMNEKMYTVCDVAMNIIISKSTTYSLESPKDPVLPARFFTQPDKNFSNTKHYLPAELKSFFTPGKPKSTNVLGAVNKPLSSAGKQMQSKSSRMETVSNASSGSNPSSPGRIKGRLDSTELDQIEYEDYTMISSPLSGKKSDKRDDSDLLKSEVEKPRRGRKQPLIDPDDSFSMDELSKPAQEPKSRTSQRGRKRAAAASESEEQAWQEKRLKEDLLENEDEQNSPPKKGRRGRPPKSAKMAISKEEPPVTTPKRGRKNVVPIESPPTDEEDHLEISEEQDSENIDQKRKGRGSSKKTPQKSDSTDSALDTSRPTPQKRRGRPPKTPTVQQKKSHVGRPRKVVSKEPESEEEMEISQNSPALSENISNEEETADEEVVAPSTGRRRTAKKRRWIQRMKSELEGPLL.

The stretch at 383-419 is one HEAT repeat; it reads LLVNDQLLNFVRERTLDKRWRVRKEAMMGLAQIYKKY. Residues 1126-1464 are disordered; that stretch reads KSTNVLGAVN…MKSELEGPLL (339 aa). Residues 1137-1155 are compositionally biased toward polar residues; sequence PLSSAGKQMQSKSSRMETV. The span at 1156–1168 shows a compositional bias: low complexity; that stretch reads SNASSGSNPSSPG. A compositionally biased stretch (acidic residues) spans 1177–1186; that stretch reads TELDQIEYED. 3 stretches are compositionally biased toward basic and acidic residues: residues 1197–1215, 1234–1244, and 1265–1274; these read KKSD…VEKP, ELSKPAQEPKS, and WQEKRLKEDL. Residues 1286-1295 show a composition bias toward basic residues; sequence KKGRRGRPPK. The a.T hook 1 DNA-binding region spans 1287-1299; the sequence is KGRRGRPPKSAKM. The segment covering 1325–1342 has biased composition (acidic residues); sequence PTDEEDHLEISEEQDSEN. Basic residues predominate over residues 1347–1357; the sequence is RKGRGSSKKTP. Positions 1359-1373 are enriched in polar residues; the sequence is KSDSTDSALDTSRPT. 2 DNA-binding regions (a.T hook) span residues 1375 to 1387 and 1391 to 1403; these read QKRR…TPTV and KSHV…VVSK. Residues 1390 to 1400 show a composition bias toward basic residues; the sequence is KKSHVGRPRKV. A compositionally biased stretch (acidic residues) spans 1425 to 1435; sequence SNEEETADEEV. Basic residues predominate over residues 1441 to 1453; sequence GRRRTAKKRRWIQ. The segment covering 1455–1464 has biased composition (basic and acidic residues); sequence MKSELEGPLL.

This sequence belongs to the PDS5 family. As to quaternary structure, interacts with the cohesin complex. In terms of processing, phosphorylated in mitotic cells.

The protein resides in the nucleus. Its function is as follows. Plays a role in androgen-induced proliferative arrest. Required for maintenance of sister chromatid cohesion during mitosis. This is Sister chromatid cohesion protein PDS5 homolog B-B (pds5b-b) from Xenopus laevis (African clawed frog).